A 644-amino-acid chain; its full sequence is Chaperone protein HtpG (644 aa).

The interval 1–352 is a; substrate-binding; that stretch reads MNARVEQLEF…AQDMSLNVSR (352 aa). Residues 353 to 566 form a b region; it reads EILQQDRQIK…AFGITPALAR (214 aa). The segment at 567–644 is c; the sequence is LYRASGQDIP…ILADRLARTL (78 aa).

Belongs to the heat shock protein 90 family. As to quaternary structure, homodimer.

Its subcellular location is the cytoplasm. In terms of biological role, molecular chaperone. Has ATPase activity. This is Chaperone protein HtpG from Mycolicibacterium paratuberculosis (strain ATCC BAA-968 / K-10) (Mycobacterium paratuberculosis).